Here is a 384-residue protein sequence, read N- to C-terminus: MTDALTITRDLIRCPSVTPADAGALGVLEALLKQAGFTTHRITFSEAGTADIDNLYARIGTEGPHITFAGHTDVVPPGDEAAWSLPAFSGEVRDGYIYGRGAVDMKGGIACSVAAALDYLRDHDGQPKGSISFLITGDEEDVSINGTIKLLQWAAERGEKFDHCVLGEPSNQEVMGDCIKIGRRGSQSGTLIVEGRQGHVAYPHRAENPVPDISRLIVALSDEPLDHGSAQFQPSNLEFTSVDVGNTASNVIPGLARAKFNIRYNDCHTQDSLRALVEERLAKACGNRIRAHIDWLPSNSKVFLTKPGPFTDLAVAAIESVTGRKPELSTTGGTSDARFIASYCPVIEFGLVGQTMHQIDERASVADIATLTKIYRGILDRYFA.

His-71 is a Zn(2+) binding site. Asp-73 is an active-site residue. Residue Asp-104 coordinates Zn(2+). Residue Glu-139 is the Proton acceptor of the active site. Zn(2+)-binding residues include Glu-140, Glu-168, and His-357.

Belongs to the peptidase M20A family. DapE subfamily. In terms of assembly, homodimer. Zn(2+) serves as cofactor. The cofactor is Co(2+).

The catalysed reaction is N-succinyl-(2S,6S)-2,6-diaminopimelate + H2O = (2S,6S)-2,6-diaminopimelate + succinate. The protein operates within amino-acid biosynthesis; L-lysine biosynthesis via DAP pathway; LL-2,6-diaminopimelate from (S)-tetrahydrodipicolinate (succinylase route): step 3/3. Functionally, catalyzes the hydrolysis of N-succinyl-L,L-diaminopimelic acid (SDAP), forming succinate and LL-2,6-diaminopimelate (DAP), an intermediate involved in the bacterial biosynthesis of lysine and meso-diaminopimelic acid, an essential component of bacterial cell walls. The sequence is that of Succinyl-diaminopimelate desuccinylase from Bradyrhizobium sp. (strain BTAi1 / ATCC BAA-1182).